Reading from the N-terminus, the 201-residue chain is Recombination protein RecR (201 aa).

The C4-type zinc-finger motif lies at 57–72; it reads CADCRTFTEQEKCNIC. Residues 81 to 176 form the Toprim domain; it reads GQICVVESPA…DASRIAHGVP (96 aa).

This sequence belongs to the RecR family.

May play a role in DNA repair. It seems to be involved in an RecBC-independent recombinational process of DNA repair. It may act with RecF and RecO. This Cronobacter sakazakii (strain ATCC BAA-894) (Enterobacter sakazakii) protein is Recombination protein RecR.